Reading from the N-terminus, the 507-residue chain is Interleukin-17 receptor E-like protein (507 aa).

Positions 1-21 (MLAGQALAFLGLTWGTFQSLA) are cleaved as a signal peptide.

The protein resides in the secreted. The polypeptide is Interleukin-17 receptor E-like protein (Homo sapiens (Human)).